The chain runs to 157 residues: Succinate dehydrogenase assembly factor 2-A, mitochondrial (157 aa).

This sequence belongs to the SDHAF2 family. As to quaternary structure, interacts with the flavoprotein subunit within the SDH catalytic dimer.

It is found in the mitochondrion matrix. Plays an essential role in the assembly of succinate dehydrogenase (SDH), an enzyme complex (also referred to as respiratory complex II) that is a component of both the tricarboxylic acid (TCA) cycle and the mitochondrial electron transport chain, and which couples the oxidation of succinate to fumarate with the reduction of ubiquinone (coenzyme Q) to ubiquinol. Required for flavinylation (covalent attachment of FAD) of the flavoprotein subunit of the SDH catalytic dimer. The chain is Succinate dehydrogenase assembly factor 2-A, mitochondrial from Drosophila willistoni (Fruit fly).